Here is a 131-residue protein sequence, read N- to C-terminus: Fumarate reductase subunit C (131 aa).

The next 3 membrane-spanning stretches (helical) occupy residues 30–50, 57–77, and 109–129; these read EGTAVPAVWFSIELIFGLFAL, WMGFVGFLQNPVVVILNLITL, and IIKGLWVVTAVVTVVILYVAL.

It belongs to the FrdC family. Part of an enzyme complex containing four subunits: a flavoprotein (FrdA), an iron-sulfur protein (FrdB), and two hydrophobic anchor proteins (FrdC and FrdD).

The protein localises to the cell inner membrane. Its function is as follows. Two distinct, membrane-bound, FAD-containing enzymes are responsible for the catalysis of fumarate and succinate interconversion; fumarate reductase is used in anaerobic growth, and succinate dehydrogenase is used in aerobic growth. Anchors the catalytic components of the fumarate reductase complex to the cell inner membrane, binds quinones. This Salmonella choleraesuis (strain SC-B67) protein is Fumarate reductase subunit C.